A 199-amino-acid chain; its full sequence is Holliday junction branch migration complex subunit RuvA (199 aa).

Residues 1-64 (MIAFLKGAVF…ENEFKLFGFL (64 aa)) form a domain I region. A domain II region spans residues 65-143 (DQDELRLFKT…ELKLVEVEKE (79 aa)). The segment at 144–148 (QRPLL) is flexible linker. Positions 148-199 (LDELMEALEILGYSRSEVLPAIMDLNRNKQLGNIVEENIKLVLKAKAQEMRR) are domain III.

This sequence belongs to the RuvA family. As to quaternary structure, homotetramer. Forms an RuvA(8)-RuvB(12)-Holliday junction (HJ) complex. HJ DNA is sandwiched between 2 RuvA tetramers; dsDNA enters through RuvA and exits via RuvB. An RuvB hexamer assembles on each DNA strand where it exits the tetramer. Each RuvB hexamer is contacted by two RuvA subunits (via domain III) on 2 adjacent RuvB subunits; this complex drives branch migration. In the full resolvosome a probable DNA-RuvA(4)-RuvB(12)-RuvC(2) complex forms which resolves the HJ.

The protein localises to the cytoplasm. Its function is as follows. The RuvA-RuvB-RuvC complex processes Holliday junction (HJ) DNA during genetic recombination and DNA repair, while the RuvA-RuvB complex plays an important role in the rescue of blocked DNA replication forks via replication fork reversal (RFR). RuvA specifically binds to HJ cruciform DNA, conferring on it an open structure. The RuvB hexamer acts as an ATP-dependent pump, pulling dsDNA into and through the RuvAB complex. HJ branch migration allows RuvC to scan DNA until it finds its consensus sequence, where it cleaves and resolves the cruciform DNA. This Syntrophomonas wolfei subsp. wolfei (strain DSM 2245B / Goettingen) protein is Holliday junction branch migration complex subunit RuvA.